The sequence spans 145 residues: Peptide methionine sulfoxide reductase MsrB (145 aa).

The region spanning 6–129 (KNERLQQLTD…NSAALRFIPV (124 aa)) is the MsrB domain. The active-site Nucleophile is the cysteine 118.

The protein belongs to the MsrB Met sulfoxide reductase family.

It catalyses the reaction L-methionyl-[protein] + [thioredoxin]-disulfide + H2O = L-methionyl-(R)-S-oxide-[protein] + [thioredoxin]-dithiol. The sequence is that of Peptide methionine sulfoxide reductase MsrB from Listeria monocytogenes serotype 4b (strain CLIP80459).